Consider the following 346-residue polypeptide: uncharacterized protein (346 aa).

A helical transmembrane segment spans residues 7-27 (AMVILLIICGTYVLFIQYGSV). The segment at 29–48 (EKKSNDSEPQVSNEEAQSGK) is disordered. Residues 35 to 44 (SEPQVSNEEA) are compositionally biased toward polar residues. Residues 231-342 (LDLTNVIRVK…VDRKYYTQNF (112 aa)) enclose the SCP domain.

Its subcellular location is the cell membrane. This is an uncharacterized protein from Bacillus subtilis (strain 168).